The following is a 1906-amino-acid chain: MGDVKLVTSTRVSKTSLTLSPSVPAEAPAFTLPPRNIRVQLGATARFEGKVRGYPEPQITWYRNGHPLPEGDHYVVDHSIRGIFSLVIKGVQEGDSGKYTCEAANDGGVRQVTVELTVEGNSLKKYSLPSSAKTPGGRLSVPPVEHRPSIWGESPPKFATKPNRVVVREGQTGRFSCKITGRPQPQVTWTKGDIHLQQNERFNMFEKTGIQYLEIQNVQLADAGIYTCTVVNSAGKASVSAELTVQGPDKTDTHAQPLCMPPKPTTLATKAIENSDFKQATSNGIAKELKSTSTELMVETKDRLSAKKETFYTSREAKDGKQGQNQEANAVPLQESRGTKGPQVLQKTSSTITLQAVKAQPEPKAEPQTTFIRQAEDRKRTVQPLMTTTTQENPSLTGQVSPRSRETENRAGVRKSVKEEKREPLGIPPQFESRPQSLEASEGQEIKFKSKVSGKPKPDVEWFKEGVPIKTGEGIQIYEEDGTHCLWLKKACLGDSGSYSCAAFNPRGQTSTSWLLTVKRPKVEEVAPCFSSVLKGCTVSEGQDFVLQCYVGGVPVPEITWLLNEQPIQYAHSTFEAGVAKLTVQDALPEDDGIYTCLAENNAGRASCSAQVTVKEKKSSKKAEGTQAAKLNKTFAPIFLKGLTDLKVMDGSQVIMTVEVSANPCPEIIWLHNGKEIQETEDFHFEKKGNEYSLYIQEVFPEDTGKYTCEAWNELGETQTQATLTVQEPQDGIQPWFISKPRSVTAAAGQNVLISCAIAGDPFPTVHWFKDGQEITPGTGCEILQNEDIFTLILRNVQSRHAGQYEIQLRNQVGECSCQVSLMLRESSASRAEMLRDGRESASSGERRDGGNYGALTFGRTSGFKKSSSETRAAEEEQEDVRGVLKRRVETREHTEESLRQQEAEQLDFRDILGKKVSTKSFSEEDLKEIPAEQMDFRANLQRQVKPKTLSEEERKVHAPQQVDFRSVLAKKGTPKTPLPEKVPPPKPAVTDFRSVLGAKKKPPAENGSASTPAPNARAGSEAQNATPNSEAPAPKPVVKKEEKNDRKCEHGCAVVDGGIIGKKAENKPAASKPTPPPSKGTAPSFTEKLQDAKVADGEKLVLQCRISSDPPASVSWTLDSKAIKSSKSIVISQEGTLCSLTIEKVMPEDGGEYKCIAENAAGKAECACKVLVEDTSSTKAAKPAEKKTKKPKTTLPPVLSTESSEATVKKKPAPKTPPKAATPPQITQFPEDRKVRAGESVELFAKVVGTAPITCTWMKFRKQIQENEYIKIENAENSSKLTISSTKQEHCGCYTLVVENKLGSRQAQVNLTVVDKPDPPAGTPCASDIRSSSLTLSWYGSSYDGGSAVQSYTVEIWNSVDNKWTDLTTCRSTSFNVQDLQADREYKFRVRAANVYGISEPSQESEVVKVGEKQEEELKEEEAELSDDEGKETEVNYRTVTINTEQKVSDVYNIEERLGSGKFGQVFRLVEKKTGKVWAGKFFKAYSAKEKENIRDEISIMNCLHHPKLVQCVDAFEEKANIVMVLEMVSGGELFERIIDEDFELTERECIKYMRQISEGVEYIHKQGIVHLDLKPENIMCVNKTGTSIKLIDFGLARRLESAGSLKVLFGTPEFVAPEVINYEPIGYETDMWSIGVICYILVSGLSPFMGDNDNETLANVTSATWDFDDEAFDEISDDAKDFISNLLKKDMKSRLNCTQCLQHPWLQKDTKNMEAKKLSKDRMKKYMARRKWQKTGHAVRAIGRLSSMAMISGMSGRKASGSSPTSPINADKVENEDAFLEEVAEEKPHVKPYFTKTILDMEVVEGSAARFDCKIEGYPDPEVMWYKDDQPVKESRHFQIDYDEEGNCSLTISEVCGDDDAKYTCKAVNSLGEATCTAELLVETMGKEGEGEGEGEEDEEEEEE.

Ig-like C2-type domains lie at 28-117 (PAFT…VELT) and 156-244 (PKFA…AELT). Disordered regions lie at residues 127-157 (SLPSSAKTPGGRLSVPPVEHRPSIWGESPPK) and 309-453 (ETFY…SKVS). The span at 309–321 (ETFYTSREAKDGK) shows a compositional bias: basic and acidic residues. Polar residues-rich tracts occupy residues 345 to 354 (LQKTSSTITL) and 384 to 402 (PLMTTTTQENPSLTGQVSP). Residues 403–424 (RSRETENRAGVRKSVKEEKREP) show a composition bias toward basic and acidic residues. Ig-like C2-type domains lie at 429–517 (PQFE…WLLT), 521–613 (PKVE…AQVT), 637–725 (PIFL…ATLT), and 735–830 (PWFI…SSAS). The stretch at 660–676 (VSANPCPEIIWLHNGKE) is one IIA-1 repeat. The 4 X repeats, motif IIA stretch occupies residues 660–1833 (VSANPCPEII…EVMWYKDDQP (1174 aa)). Residues 693-708 (SLYIQEVFPEDTGKYT) form an IIB-1 repeat. The segment at 693 to 1866 (SLYIQEVFPE…VCGDDDAKYT (1174 aa)) is 5 X repeats, motif IIB. The IIA-2 repeat unit spans residues 758-774 (IAGDPFPTVHWFKDGQE). The stretch at 791-807 (TLILRNVQSRHAGQYEI) is one IIB-2 repeat. Disordered stretches follow at residues 831 to 881 (RAEM…QEDV) and 947 to 1086 (PKTL…APSF). 2 stretches are compositionally biased toward basic and acidic residues: residues 833-850 (EMLRDGRESASSGERRDG) and 867-881 (SSSETRAAEEEQEDV). The III-1 repeat unit spans residues 970 to 987 (AKKGTPKTPLPEKVPPPK). Residues 970–1226 (AKKGTPKTPL…TPPKAATPPQ (257 aa)) are 4 X repeats, motif III. The span at 977–988 (TPLPEKVPPPKP) shows a compositional bias: pro residues. Residues 999–1016 (AKKKPPAENGSASTPAPN) form an III-2 repeat. Basic and acidic residues predominate over residues 1039 to 1051 (VKKEEKNDRKCEH). The III-3 repeat unit spans residues 1061–1078 (IGKKAENKPAASKPTPPP). Ig-like C2-type domains follow at residues 1084–1172 (PSFT…CKVL) and 1225–1313 (PQIT…VNLT). An IIA-3 repeat occupies 1107-1123 (ISSDPPASVSWTLDSKA). The IIB-3 repeat unit spans residues 1140–1156 (SLTIEKVMPEDGGEYKC). Residues 1180-1227 (KAAKPAEKKTKKPKTTLPPVLSTESSEATVKKKPAPKTPPKAATPPQI) are disordered. Residues 1209-1226 (VKKKPAPKTPPKAATPPQ) form an III-4 repeat. The IIB-4 repeat unit spans residues 1281–1297 (KLTISSTKQEHCGCYTL). Residues 1317-1364 (KPDPPAGTPCASDIRSSSLTLSWYGSSYDGGSAVQSYTVEIWNSVDNK) form a motif IA region. A Fibronectin type-III domain is found at 1321–1414 (PAGTPCASDI…ESEVVKVGEK (94 aa)). The motif IB stretch occupies residues 1385–1402 (REYKFRVRAANVYGISEP). The tract at residues 1414 to 1433 (KQEEELKEEEAELSDDEGKE) is disordered. Positions 1415-1432 (QEEELKEEEAELSDDEGK) are enriched in acidic residues. The Protein kinase domain occupies 1453–1708 (YNIEERLGSG…CTQCLQHPWL (256 aa)). Residues 1459-1467 (LGSGKFGQV) and lysine 1482 contribute to the ATP site. Aspartate 1574 (proton acceptor) is an active-site residue. Residues 1700–1763 (TQCLQHPWLQ…SGMSGRKASG (64 aa)) form a calmodulin-binding region. A calmodulin autoinhibition (AM13) region region spans residues 1716–1728 (EAKKLSKDRMKKY). Residues 1730 to 1749 (ARRKWQKTGHAVRAIGRLSS) form a calmodulin recognition (RS20) region region. Phosphoserine; by PKG is present on serine 1762. Serine 1768 is modified (phosphoserine; by MAPK). One can recognise an Ig-like C2-type 9 domain in the interval 1794-1885 (PYFTKTILDM…ATCTAELLVE (92 aa)). One copy of the IIA-4 repeat lies at 1817-1833 (IEGYPDPEVMWYKDDQP). The IIB-5 repeat unit spans residues 1851-1866 (SLTISEVCGDDDAKYT). Residues 1885 to 1906 (ETMGKEGEGEGEGEEDEEEEEE) form a disordered region. A compositionally biased stretch (acidic residues) spans 1893-1906 (GEGEGEEDEEEEEE).

Belongs to the protein kinase superfamily. CAMK Ser/Thr protein kinase family. In terms of assembly, all isoforms including Telokin bind calmodulin. Mg(2+) is required as a cofactor. Requires Ca(2+) as cofactor. Post-translationally, the C-terminus is deglutamylated, leading to the formation of Myosin light chain kinase, smooth muscle, deglutamylated form. The C-terminus is variable, with one to five C-terminal glutamyl residues being removed producing five forms differring in their number of C-terminal glutamyl residues. In terms of processing, acetylated. Phosphorylation of telokin by PKG has no significant effect on its myosin binding activity, but promotes translocation to the membrane. Isoform telokin is expressed in gizzard, heart, lung, intestine, and skeletal muscle although the levels of the expression in the latter were much less than that in the gizzard.

It is found in the cytoplasm. Its subcellular location is the cytosol. It localises to the membrane. It carries out the reaction L-seryl-[myosin light chain] + ATP = O-phospho-L-seryl-[myosin light chain] + ADP + H(+). The catalysed reaction is L-threonyl-[myosin light chain] + ATP = O-phospho-L-threonyl-[myosin light chain] + ADP + H(+). Its activity is regulated as follows. Activated by phosphorylation on Tyr-478. Isoforms which lack this tyrosine residue are not regulated in this way. All catalytically active isoforms require binding to calcium and calmodulin for activation. In terms of biological role, phosphorylates a specific serine in the N-terminus of a myosin light chain, which leads to the formation of calmodulin/MLCK signal transduction complexes which allow selective transduction of calcium signals. The polypeptide is Myosin light chain kinase, smooth muscle (Mylk) (Gallus gallus (Chicken)).